The chain runs to 359 residues: Large ribosomal subunit protein uL3 (359 aa).

Residues 336 to 359 are disordered; the sequence is VRPPAKRPPAEAPQITYISRESKQ.

This sequence belongs to the universal ribosomal protein uL3 family. In terms of assembly, part of the 50S ribosomal subunit. Forms a cluster with proteins L14 and L24e.

One of the primary rRNA binding proteins, it binds directly near the 3'-end of the 23S rRNA, where it nucleates assembly of the 50S subunit. This Thermococcus sibiricus (strain DSM 12597 / MM 739) protein is Large ribosomal subunit protein uL3.